The chain runs to 101 residues: Integration host factor subunit beta (101 aa).

Residues Pro-57–Ser-76 form a disordered region.

It belongs to the bacterial histone-like protein family. Heterodimer of an alpha and a beta chain.

This protein is one of the two subunits of integration host factor, a specific DNA-binding protein that functions in genetic recombination as well as in transcriptional and translational control. The polypeptide is Integration host factor subunit beta (Nitrobacter winogradskyi (strain ATCC 25391 / DSM 10237 / CIP 104748 / NCIMB 11846 / Nb-255)).